The primary structure comprises 218 residues: Oxaloacetate decarboxylase, mitochondrial (218 aa).

The N-terminal 18 residues, methionine 1 to tyrosine 18, are a transit peptide targeting the mitochondrion. 3 residues coordinate Mg(2+): glutamate 63, glutamate 65, and aspartate 94.

It belongs to the FAH family. Homodimer. Mg(2+) serves as cofactor. It depends on Mn(2+) as a cofactor.

The protein resides in the mitochondrion. Its subcellular location is the cytoplasm. It is found in the cytosol. It carries out the reaction a 3-acylpyruvate + H2O = a carboxylate + pyruvate + H(+). The catalysed reaction is acetylpyruvate + H2O = acetate + pyruvate + H(+). The enzyme catalyses 3-fumarylpyruvate + H2O = fumarate + pyruvate + H(+). It catalyses the reaction oxaloacetate + H(+) = pyruvate + CO2. Mitochondrial protein that acts as an oxaloacetate decarboxylase (ODx), catalyzing the decarboxylation of oxaloacetate (OAA) to pyruvate and CO(2), and as such is likely a regulatory enzyme in the TCA cycle. Also displays acylpyruvase activity, being able to hydrolyze acetylpyruvate and fumarylpyruvate in vitro. The sequence is that of Oxaloacetate decarboxylase, mitochondrial (fahd1) from Dictyostelium discoideum (Social amoeba).